The following is a 382-amino-acid chain: Gap junction alpha-1 protein (382 aa).

The Cytoplasmic portion of the chain corresponds to 2-23; that stretch reads GDWSALGKLLDKVQAYSTAGGK. Ser5 is modified (phosphoserine). The chain crosses the membrane as a helical span at residues 24–44; that stretch reads VWLSVLFIFRILLLGTAVESA. Residues 45–76 lie on the Extracellular side of the membrane; it reads WGDEQSAFRCNTQQPGCENVCYDKSFPISHVR. 2 cysteine pairs are disulfide-bonded: Cys54/Cys192 and Cys187/Cys198. Residues 77 to 97 form a helical membrane-spanning segment; it reads FWVLQIIFVSVPTLLYLAHVF. Topologically, residues 98–155 are cytoplasmic; the sequence is YVMRKEEKLNKKEEELKVAQTDGVNVEMHLKQIEIKKFKYGIEEHGKVKMRGGLLRTY. Residue Lys144 forms a Glycyl lysine isopeptide (Lys-Gly) (interchain with G-Cter in SUMO) linkage. The helical transmembrane segment at 156-176 threads the bilayer; the sequence is IISILFKSVFEVAFLLIQWYI. The Extracellular portion of the chain corresponds to 177–207; it reads YGFSLSAVYTCKRDPCPHQVDCFLSRPTEKT. A helical membrane pass occupies residues 208–228; that stretch reads IFIIFMLVVSLVSLALNIIEL. The Cytoplasmic portion of the chain corresponds to 229-382; sequence FYVFFKGVKD…SRPRPDDLEI (154 aa). Lys237 is covalently cross-linked (Glycyl lysine isopeptide (Lys-Gly) (interchain with G-Cter in SUMO)). The interval 244-382 is interaction with NOV; the sequence is SDPYHATTGP…SRPRPDDLEI (139 aa). Residue Tyr247 is modified to Phosphotyrosine. A phosphoserine mark is found at Ser255, Ser257, and Ser262. Residues 264–382 form an interaction with UBQLN4 region; that stretch reads KYAYFNGCSS…SRPRPDDLEI (119 aa). S-nitrosocysteine is present on Cys271. A Phosphothreonine modification is found at Thr275. Phosphoserine occurs at positions 306 and 314. Residues 317–332 show a composition bias toward polar residues; sequence QNRMGQAGSTISNSHA. The tract at residues 317–382 is disordered; that stretch reads QNRMGQAGST…SRPRPDDLEI (66 aa). Ser325 is subject to Phosphoserine; by CK1. A Phosphothreonine modification is found at Thr326. A phosphoserine; by CK1 mark is found at Ser328 and Ser330. Phosphoserine occurs at positions 344 and 365. Over residues 362–374 the composition is skewed to low complexity; the sequence is RPSSRASSRASSR. A Phosphoserine; by PKC/PRKCG and PKC/PRKCD modification is found at Ser368. Phosphoserine is present on residues Ser369 and Ser373.

This sequence belongs to the connexin family. Alpha-type (group II) subfamily. As to quaternary structure, a connexon is composed of a hexamer of connexins. Interacts with SGSM3. Interacts with RIC1/CIP150. Interacts with CNST and CSNK1D. Interacts (via C-terminus) with TJP1. Interacts (via C-terminus) with SRC (via SH3 domain). Interacts (not ubiquitinated) with UBQLN4 (via UBA domain). Interacts with NOV. Interacts with TMEM65. Interacts with ANK3/ANKG and PKP2. In terms of processing, phosphorylation at Ser-325, Ser-328 and Ser-330 by CK1 modulates gap junction assembly. Phosphorylated at Ser-368 by PRKCG; phosphorylation induces disassembly of gap junction plaques and inhibition of gap junction activity. Phosphorylation at Ser-368 by PRKCD triggers its internalization into small vesicles leading to proteasome-mediated degradation. Sumoylated with SUMO1, SUMO2 and SUMO3, which may regulate the level of functional Cx43 gap junctions at the plasma membrane. May be desumoylated by SENP1 or SENP2. Post-translationally, S-nitrosylation at Cys-271 is enriched at the muscle endothelial gap junction in arteries, it augments channel permeability and may regulate of smooth muscle cell to endothelial cell communication. In terms of processing, acetylated in the developing cortex; leading to delocalization from the cell membrane.

The protein localises to the cell membrane. Its subcellular location is the cell junction. It localises to the gap junction. The protein resides in the endoplasmic reticulum. In terms of biological role, gap junction protein that acts as a regulator of bladder capacity. A gap junction consists of a cluster of closely packed pairs of transmembrane channels, the connexons, through which materials of low MW diffuse from one cell to a neighboring cell. May play a critical role in the physiology of hearing by participating in the recycling of potassium to the cochlear endolymph. Negative regulator of bladder functional capacity: acts by enhancing intercellular electrical and chemical transmission, thus sensitizing bladder muscles to cholinergic neural stimuli and causing them to contract. May play a role in cell growth inhibition through the regulation of NOV expression and localization. Plays an essential role in gap junction communication in the ventricles. This chain is Gap junction alpha-1 protein (GJA1), found in Oryctolagus cuniculus (Rabbit).